We begin with the raw amino-acid sequence, 576 residues long: Acyl-CoA ligase sidI (576 aa).

Positions 3–11 (PVTTKTIRP) match the PTS2-type peroxisomal targeting signal motif. Residues aspartate 439, arginine 454, and lysine 553 each contribute to the ATP site.

The protein belongs to the ATP-dependent AMP-binding enzyme family.

The protein resides in the peroxisome. The protein operates within siderophore biosynthesis. Functionally, acyl-CoA ligase; part of the gene cluster that mediates the biosynthesis of at least 11 siderophores, including beauverichelin A, dimerumic acid (DA), Na-dimethyl coprogen (NADC), eleutherazine B, ferricrocin (FC), fusarinine A, fusarinine C (FsC), metachelin A, mevalonolactone, rhodotorulic acid (RA) and tenellin. This cocktail of siderophores for iron metabolism is essential for virulence, and more specifically for the fungal virulence in penetrating through the host cuticle. Siderophore synthesis is also involved in conidial germination under iron-deficient conditions. For biosynthesis of fusarinine C, the transacylase SIDF transfers anhydromevalonyl to N(5)-hydroxyornithine. The required anhydromevalonyl-CoA moiety is derived from mevalonate by CoA ligation and dehydration catalyzed by SIDI and sidH respectively. In Beauveria bassiana (strain ARSEF 2860) (White muscardine disease fungus), this protein is Acyl-CoA ligase sidI.